Consider the following 498-residue polypeptide: MQETPSVPSNSSSHSQSVLTIQRQVSALGSSSTGPTSLKTSSTPTPGQLKTKVPNVRRMRRIISEDAEWSLAIVPLLTELCIQHIVKNFQNNPILKQLPLEHQKKVLSNLPPELPLTVTANLIDDENYWHRCCIKRWSVCHVSRHGGSWKRMFFERHLENLLKLFIPGTTDPNVILDLLPLCRNYVRRIHVDQFLPPVRMPTPLQGEEQSDSGSEGEGSEPEKDHYQLQTLVGGLKHLEELDLVYGVKDCGMNFEWNLFLFTYRDCYSLAATIKACHTLKIFKLTRSKVDDDKARILIRSLLDHPALEELDLSHNLIGDRGARAAAKLLSHSRLRVLNLANNQLQAPGAQSLAHALAHNTNLVFLNLRLNCIEDEGGQAIAHALETNKCLSVLHLGGNKLSEPTATLLSQMLTVNTTLVSLNLSCNHIGQDGGKQLLEGISDNKTILEFDLRLSDVSQESEYLIGQVLHANREAARQRTLNPGHFSSPTNNCTENSVV.

Disordered regions lie at residues 27-52 (ALGSSSTGPTSLKTSSTPTPGQLKTK) and 200-223 (MPTPLQGEEQSDSGSEGEGSEPEK). A compositionally biased stretch (low complexity) spans 28-47 (LGSSSTGPTSLKTSSTPTPG). LRR repeat units follow at residues 276 to 299 (CHTLKIFKLTRSKVDDDKARILIR), 306 to 327 (ALEELDLSHNLIGDRGARAAAK), 333 to 353 (RLRVLNLANNQLQAPGAQSLA), 361 to 382 (NLVFLNLRLNCIEDEGGQAIAH), 389 to 409 (CLSVLHLGGNKLSEPTATLLS), and 417 to 438 (TLVSLNLSCNHIGQDGGKQLLE).

This sequence belongs to the DRC5 family. In terms of assembly, component of the nexin-dynein regulatory complex (N-DRC). Interacts with DRC1. Interacts with FBXL13/DRC6, DRC3 and DRC7. In terms of tissue distribution, testis-specific (at protein level).

It localises to the cell projection. It is found in the cilium. Its subcellular location is the flagellum. The protein resides in the cytoplasm. The protein localises to the cytoskeleton. It localises to the flagellum axoneme. In terms of biological role, component of the nexin-dynein regulatory complex (N-DRC) a key regulator of ciliary/flagellar motility which maintains the alignment and integrity of the distal axoneme and regulates microtubule sliding in motile axonemes. May play a role in the assembly of N-DRC. Required for sperm motility. This chain is Dynein regulatory complex subunit 5 (Tcte1), found in Mus musculus (Mouse).